We begin with the raw amino-acid sequence, 57 residues long: UPF0057 membrane protein T23F2.5 (57 aa).

A run of 2 helical transmembrane segments spans residues leucine 3–tryptophan 23 and isoleucine 36–alanine 56.

Belongs to the UPF0057 (PMP3) family.

Its subcellular location is the membrane. In Caenorhabditis elegans, this protein is UPF0057 membrane protein T23F2.5.